The chain runs to 202 residues: Holliday junction branch migration complex subunit RuvA (202 aa).

A domain I region spans residues 1–65 (MIAYVEGRLA…EDALELYGFA (65 aa)). Residues 66 to 144 (TWDERQTFIV…VEDLPAAAPL (79 aa)) are domain II. Residues 145-155 (VTGGAPGGVFR) form a flexible linker region. Positions 155–202 (RDALAGLANLGYGEEEASHVLKEVLHGEPDLDVGGALRAALRALARGR) are domain III.

It belongs to the RuvA family. As to quaternary structure, homotetramer. Forms an RuvA(8)-RuvB(12)-Holliday junction (HJ) complex. HJ DNA is sandwiched between 2 RuvA tetramers; dsDNA enters through RuvA and exits via RuvB. An RuvB hexamer assembles on each DNA strand where it exits the tetramer. Each RuvB hexamer is contacted by two RuvA subunits (via domain III) on 2 adjacent RuvB subunits; this complex drives branch migration. In the full resolvosome a probable DNA-RuvA(4)-RuvB(12)-RuvC(2) complex forms which resolves the HJ.

Its subcellular location is the cytoplasm. The RuvA-RuvB-RuvC complex processes Holliday junction (HJ) DNA during genetic recombination and DNA repair, while the RuvA-RuvB complex plays an important role in the rescue of blocked DNA replication forks via replication fork reversal (RFR). RuvA specifically binds to HJ cruciform DNA, conferring on it an open structure. The RuvB hexamer acts as an ATP-dependent pump, pulling dsDNA into and through the RuvAB complex. HJ branch migration allows RuvC to scan DNA until it finds its consensus sequence, where it cleaves and resolves the cruciform DNA. In Nitratidesulfovibrio vulgaris (strain DP4) (Desulfovibrio vulgaris), this protein is Holliday junction branch migration complex subunit RuvA.